Consider the following 861-residue polypeptide: Leucine--tRNA ligase (861 aa).

Residues 42–52 carry the 'HIGH' region motif; that stretch reads PYPSGNLHMGH. Residues 620-624 carry the 'KMSKS' region motif; that stretch reads KMSKS. Lys-623 serves as a coordination point for ATP.

The protein belongs to the class-I aminoacyl-tRNA synthetase family.

Its subcellular location is the cytoplasm. The enzyme catalyses tRNA(Leu) + L-leucine + ATP = L-leucyl-tRNA(Leu) + AMP + diphosphate. The sequence is that of Leucine--tRNA ligase from Baumannia cicadellinicola subsp. Homalodisca coagulata.